A 357-amino-acid chain; its full sequence is Protein RecA (357 aa).

78–85 (GPESSGKT) contributes to the ATP binding site.

This sequence belongs to the RecA family.

The protein resides in the cytoplasm. In terms of biological role, can catalyze the hydrolysis of ATP in the presence of single-stranded DNA, the ATP-dependent uptake of single-stranded DNA by duplex DNA, and the ATP-dependent hybridization of homologous single-stranded DNAs. It interacts with LexA causing its activation and leading to its autocatalytic cleavage. This Cereibacter sphaeroides (strain ATCC 17029 / ATH 2.4.9) (Rhodobacter sphaeroides) protein is Protein RecA.